We begin with the raw amino-acid sequence, 243 residues long: Probable 6-oxopurine nucleoside phosphorylase (243 aa).

Phosphate contacts are provided by residues Thr-8 and 48-49 (RH). Residue Met-174 coordinates substrate. Thr-175 is a phosphate binding site. 198-200 (NYA) is a substrate binding site.

The protein belongs to the PNP/MTAP phosphorylase family. MTAP subfamily. In terms of assembly, homohexamer. Dimer of a homotrimer.

The catalysed reaction is a purine D-ribonucleoside + phosphate = a purine nucleobase + alpha-D-ribose 1-phosphate. It functions in the pathway purine metabolism; purine nucleoside salvage. Functionally, purine nucleoside phosphorylase which is highly specific for 6-oxopurine nucleosides. Cleaves guanosine or inosine to respective bases and sugar-1-phosphate molecules. Involved in purine salvage. This is Probable 6-oxopurine nucleoside phosphorylase from Archaeoglobus fulgidus (strain ATCC 49558 / DSM 4304 / JCM 9628 / NBRC 100126 / VC-16).